Consider the following 148-residue polypeptide: SsrA-binding protein (148 aa).

Belongs to the SmpB family.

It is found in the cytoplasm. Required for rescue of stalled ribosomes mediated by trans-translation. Binds to transfer-messenger RNA (tmRNA), required for stable association of tmRNA with ribosomes. tmRNA and SmpB together mimic tRNA shape, replacing the anticodon stem-loop with SmpB. tmRNA is encoded by the ssrA gene; the 2 termini fold to resemble tRNA(Ala) and it encodes a 'tag peptide', a short internal open reading frame. During trans-translation Ala-aminoacylated tmRNA acts like a tRNA, entering the A-site of stalled ribosomes, displacing the stalled mRNA. The ribosome then switches to translate the ORF on the tmRNA; the nascent peptide is terminated with the 'tag peptide' encoded by the tmRNA and targeted for degradation. The ribosome is freed to recommence translation, which seems to be the essential function of trans-translation. The polypeptide is SsrA-binding protein (Ehrlichia ruminantium (strain Gardel)).